A 77-amino-acid polypeptide reads, in one-letter code: Conotoxin Vc6c (77 aa).

Residues 1–22 form the signal peptide; the sequence is MKLTCMVIVAVLFLTANTFVTA. Positions 23-51 are excised as a propeptide; that stretch reads DDSGNGLENLFSKAHHEIKNPEASNLNKR. Cystine bridges form between C52–C67, C59–C71, and C66–C76.

Expressed by the venom duct.

The protein localises to the secreted. The polypeptide is Conotoxin Vc6c (Conus victoriae (Queen Victoria cone)).